A 106-amino-acid polypeptide reads, in one-letter code: Evasin P1168 (106 aa).

The signal sequence occupies residues 1-24; it reads MEVKISTFLQIAVLIVLGIHLIAA. Intrachain disulfides connect Cys-45-Cys-67, Cys-49-Cys-69, and Cys-60-Cys-80. N-linked (GlcNAc...) asparagine glycosylation is found at Asn-48, Asn-54, and Asn-64.

Its subcellular location is the secreted. Its function is as follows. Salivary chemokine-binding protein which binds to host chemokines CXCL1, CXCL2 and CXCL8. The sequence is that of Evasin P1168 from Ixodes ricinus (Common tick).